Consider the following 414-residue polypeptide: Serine/threonine transporter SstT (414 aa).

The next 8 helical transmembrane spans lie at 16–36 (GSLV…AWIS), 46–66 (LGTL…LMLV), 84–104 (ILFL…VFSF), 143–163 (ALLN…GFAL), 180–200 (AVTF…FGLV), 219–239 (LVVL…LLVF), 300–320 (MAGA…TLGV), and 332–352 (VVAS…LLLI).

The protein belongs to the dicarboxylate/amino acid:cation symporter (DAACS) (TC 2.A.23) family.

Its subcellular location is the cell inner membrane. It carries out the reaction L-serine(in) + Na(+)(in) = L-serine(out) + Na(+)(out). It catalyses the reaction L-threonine(in) + Na(+)(in) = L-threonine(out) + Na(+)(out). In terms of biological role, involved in the import of serine and threonine into the cell, with the concomitant import of sodium (symport system). The sequence is that of Serine/threonine transporter SstT from Salmonella dublin (strain CT_02021853).